A 155-amino-acid polypeptide reads, in one-letter code: Xanthine-guanine phosphoribosyltransferase (155 aa).

5-phospho-alpha-D-ribose 1-diphosphate-binding positions include 37-38 (RG), Arg-69, and 90-98 (EDLVDTGTT). Arg-69 contributes to the GMP binding site. Position 91 (Asp-91) interacts with Mg(2+). Guanine contacts are provided by Asp-94 and Ile-137. 2 residues coordinate xanthine: Asp-94 and Ile-137. Residues 94–98 (DTGTT) and 136–137 (WI) each bind GMP.

It belongs to the purine/pyrimidine phosphoribosyltransferase family. XGPT subfamily. Homotetramer. The cofactor is Mg(2+).

The protein localises to the cell inner membrane. The catalysed reaction is GMP + diphosphate = guanine + 5-phospho-alpha-D-ribose 1-diphosphate. It catalyses the reaction XMP + diphosphate = xanthine + 5-phospho-alpha-D-ribose 1-diphosphate. The enzyme catalyses IMP + diphosphate = hypoxanthine + 5-phospho-alpha-D-ribose 1-diphosphate. Its pathway is purine metabolism; GMP biosynthesis via salvage pathway; GMP from guanine: step 1/1. The protein operates within purine metabolism; XMP biosynthesis via salvage pathway; XMP from xanthine: step 1/1. Purine salvage pathway enzyme that catalyzes the transfer of the ribosyl-5-phosphate group from 5-phospho-alpha-D-ribose 1-diphosphate (PRPP) to the N9 position of the 6-oxopurines guanine and xanthine to form the corresponding ribonucleotides GMP (guanosine 5'-monophosphate) and XMP (xanthosine 5'-monophosphate), with the release of PPi. To a lesser extent, also acts on hypoxanthine. In Aeromonas hydrophila subsp. hydrophila (strain ATCC 7966 / DSM 30187 / BCRC 13018 / CCUG 14551 / JCM 1027 / KCTC 2358 / NCIMB 9240 / NCTC 8049), this protein is Xanthine-guanine phosphoribosyltransferase.